The sequence spans 145 residues: D-aminoacyl-tRNA deacylase (145 aa).

Positions 137–138 (GP) match the Gly-cisPro motif, important for rejection of L-amino acids motif.

It belongs to the DTD family. As to quaternary structure, homodimer.

Its subcellular location is the cytoplasm. It catalyses the reaction glycyl-tRNA(Ala) + H2O = tRNA(Ala) + glycine + H(+). The enzyme catalyses a D-aminoacyl-tRNA + H2O = a tRNA + a D-alpha-amino acid + H(+). An aminoacyl-tRNA editing enzyme that deacylates mischarged D-aminoacyl-tRNAs. Also deacylates mischarged glycyl-tRNA(Ala), protecting cells against glycine mischarging by AlaRS. Acts via tRNA-based rather than protein-based catalysis; rejects L-amino acids rather than detecting D-amino acids in the active site. By recycling D-aminoacyl-tRNA to D-amino acids and free tRNA molecules, this enzyme counteracts the toxicity associated with the formation of D-aminoacyl-tRNA entities in vivo and helps enforce protein L-homochirality. In Exiguobacterium sibiricum (strain DSM 17290 / CCUG 55495 / CIP 109462 / JCM 13490 / 255-15), this protein is D-aminoacyl-tRNA deacylase.